The following is a 374-amino-acid chain: tRNA-specific 2-thiouridylase MnmA (374 aa).

Residues 13-20 (GMSGGVDS) and Met-39 each bind ATP. Residues 99-101 (NPD) form an interaction with target base in tRNA region. Cys-104 (nucleophile) is an active-site residue. A disulfide bridge connects residues Cys-104 and Cys-201. Gly-128 contributes to the ATP binding site. Positions 151 to 153 (KDQ) are interaction with tRNA. Cys-201 functions as the Cysteine persulfide intermediate in the catalytic mechanism. The interval 313-314 (RY) is interaction with tRNA.

It belongs to the MnmA/TRMU family.

It localises to the cytoplasm. It carries out the reaction S-sulfanyl-L-cysteinyl-[protein] + uridine(34) in tRNA + AH2 + ATP = 2-thiouridine(34) in tRNA + L-cysteinyl-[protein] + A + AMP + diphosphate + H(+). In terms of biological role, catalyzes the 2-thiolation of uridine at the wobble position (U34) of tRNA, leading to the formation of s(2)U34. This chain is tRNA-specific 2-thiouridylase MnmA, found in Streptococcus equi subsp. equi (strain 4047).